The following is a 496-amino-acid chain: Solute carrier family 2, facilitated glucose transporter member 3 (496 aa).

Topologically, residues 1 to 10 (MGTQKVTPAL) are cytoplasmic. A helical transmembrane segment spans residues 11–32 (IFAITVATIGSFQFGYNTGVIN). Over 33–64 (APEKIIKEFINKTLTDKGNAPPSEVLLTSLWS) the chain is Extracellular. Asn43 carries N-linked (GlcNAc...) asparagine glycosylation. Residues 65 to 85 (LSVAIFSVGGMIGSFSVGLFV) form a helical membrane-spanning segment. Residues 86–90 (NRFGR) lie on the Cytoplasmic side of the membrane. The chain crosses the membrane as a helical span at residues 91 to 111 (RNSMLIVNLLAVTGGCFMGLC). At 112-118 (KVAKSVE) the chain is on the extracellular side. A helical transmembrane segment spans residues 119 to 142 (MLILGRLIIGLFCGLCTGFVPMYI). Residues 143 to 153 (GEISPTALRGA) are Cytoplasmic-facing. The chain crosses the membrane as a helical span at residues 154-174 (FGTLNQLGIVVGILVAQIFGL). Residue Gln159 participates in D-glucose binding. Residues 175–183 (EFILGSEEL) lie on the Extracellular side of the membrane. A helical transmembrane segment spans residues 184–204 (WPLLLGFTILPTILQSAALPF). Topologically, residues 205–269 (CPESPRFLLI…LFRVSSYRQP (65 aa)) are cytoplasmic. Thr232 carries the phosphothreonine modification. Residues 270 to 290 (IIISIVLQLSQQLSGINAVFY) traverse the membrane as a helical segment. An important for selectivity against fructose region spans residues 277–279 (QLS). Residues 280–281 (QQ) and Asn286 contribute to the D-glucose site. The Extracellular portion of the chain corresponds to 291-304 (YSTGIFKDAGVQEP). The helical transmembrane segment at 305-325 (IYATIGAGVVNTIFTVVSLFL) threads the bilayer. Position 315 (Asn315) interacts with D-glucose. Over 326–331 (VERAGR) the chain is Cytoplasmic. A helical membrane pass occupies residues 332–352 (RTLHMIGLGGMAFCSTLMTVS). Topologically, residues 353-363 (LLLKDNYNGMS) are extracellular. Residues 364-389 (FVCIGAILVFVAFFEIGPGPIPWFIV) traverse the membrane as a helical segment. D-glucose contacts are provided by Glu378 and Trp386. Over 390–399 (AELFSQGPRP) the chain is Cytoplasmic. Residues 400-420 (AAMAVAGCSNWTSNFLVGLLF) form a helical membrane-spanning segment. The Extracellular segment spans residues 421 to 429 (PSAAHYLGA). The chain crosses the membrane as a helical span at residues 430-450 (YVFIIFTGFLITFLAFTFFKV). The Cytoplasmic portion of the chain corresponds to 451–496 (PETRGRTFEDITRAFEGQAHGADRSGKDGVMEVNSIEPAKETTTNV). 2 positions are modified to phosphoserine: Ser475 and Ser485. Thr492 carries the phosphothreonine modification.

The protein belongs to the major facilitator superfamily. Sugar transporter (TC 2.A.1.1) family. Glucose transporter subfamily. As to quaternary structure, interacts with SMIM43; the interaction may promote SLC2A3-mediated glucose transport to meet the energy needs of mesendoderm differentiation.

The protein resides in the cell membrane. It is found in the perikaryon. The protein localises to the cell projection. It carries out the reaction D-glucose(out) = D-glucose(in). The catalysed reaction is D-galactose(in) = D-galactose(out). Its activity is regulated as follows. Deoxyglucose transport is inhibited by D-glucose, D-galactose and maltose. Galactose transport is inhibited by D-glucose and maltose. In terms of biological role, facilitative glucose transporter. Can also mediate the uptake of various other monosaccharides across the cell membrane. Mediates the uptake of glucose, 2-deoxyglucose, galactose, mannose, xylose and fucose, and probably also dehydroascorbate. Does not mediate fructose transport. Required for mesendoderm differentiation. The sequence is that of Solute carrier family 2, facilitated glucose transporter member 3 from Pongo abelii (Sumatran orangutan).